We begin with the raw amino-acid sequence, 483 residues long: Glycogen synthase (483 aa).

Lysine 15 is a binding site for ADP-alpha-D-glucose.

It belongs to the glycosyltransferase 1 family. Bacterial/plant glycogen synthase subfamily.

The enzyme catalyses [(1-&gt;4)-alpha-D-glucosyl](n) + ADP-alpha-D-glucose = [(1-&gt;4)-alpha-D-glucosyl](n+1) + ADP + H(+). The protein operates within glycan biosynthesis; glycogen biosynthesis. Its function is as follows. Synthesizes alpha-1,4-glucan chains using ADP-glucose. This chain is Glycogen synthase, found in Petrotoga mobilis (strain DSM 10674 / SJ95).